The sequence spans 424 residues: Kynurenine--oxoglutarate transaminase 1 (424 aa).

A substrate-binding site is contributed by Gly36. Lys82 carries the N6-succinyllysine modification. Residue Asn185 participates in substrate binding. Position 247 is an N6-(pyridoxal phosphate)lysine (Lys247). Arg398 is a binding site for substrate. An N6-succinyllysine modification is found at Lys413.

Belongs to the class-I pyridoxal-phosphate-dependent aminotransferase family. In terms of assembly, homodimer. Pyridoxal 5'-phosphate serves as cofactor.

The protein resides in the cytoplasm. It is found in the cytosol. The catalysed reaction is L-kynurenine + 2-oxoglutarate = kynurenate + L-glutamate + H2O. It carries out the reaction 3-phenylpyruvate + L-glutamine = 2-oxoglutaramate + L-phenylalanine. The enzyme catalyses an S-substituted L-cysteine + H2O = a thiol + pyruvate + NH4(+). It functions in the pathway amino-acid degradation; L-kynurenine degradation; kynurenate from L-kynurenine: step 1/2. In terms of biological role, catalyzes the irreversible transamination of the L-tryptophan metabolite L-kynurenine to form kynurenic acid (KA), an intermediate in the tryptophan catabolic pathway which is also a broad spectrum antagonist of the three ionotropic excitatory amino acid receptors among others. Metabolizes the cysteine conjugates of certain halogenated alkenes and alkanes to form reactive metabolites. Catalyzes the beta-elimination of S-conjugates and Se-conjugates of L-(seleno)cysteine, resulting in the cleavage of the C-S or C-Se bond. This chain is Kynurenine--oxoglutarate transaminase 1 (Kyat1), found in Mus musculus (Mouse).